Consider the following 612-residue polypeptide: DNA mismatch repair protein MutL (612 aa).

It belongs to the DNA mismatch repair MutL/HexB family.

This protein is involved in the repair of mismatches in DNA. It is required for dam-dependent methyl-directed DNA mismatch repair. May act as a 'molecular matchmaker', a protein that promotes the formation of a stable complex between two or more DNA-binding proteins in an ATP-dependent manner without itself being part of a final effector complex. This chain is DNA mismatch repair protein MutL, found in Bartonella quintana (strain Toulouse) (Rochalimaea quintana).